The primary structure comprises 58 residues: UPF0391 membrane protein ABO_0024 (58 aa).

The next 2 membrane-spanning stretches (helical) occupy residues 4–24 (WALT…GGIA) and 28–48 (ASIA…SLVV).

Belongs to the UPF0391 family.

The protein resides in the cell membrane. In Alcanivorax borkumensis (strain ATCC 700651 / DSM 11573 / NCIMB 13689 / SK2), this protein is UPF0391 membrane protein ABO_0024.